The chain runs to 306 residues: Ribosomal protein L11 methyltransferase (306 aa).

4 residues coordinate S-adenosyl-L-methionine: Thr154, Gly179, Asp201, and Asn242.

This sequence belongs to the methyltransferase superfamily. PrmA family.

The protein localises to the cytoplasm. The catalysed reaction is L-lysyl-[protein] + 3 S-adenosyl-L-methionine = N(6),N(6),N(6)-trimethyl-L-lysyl-[protein] + 3 S-adenosyl-L-homocysteine + 3 H(+). Methylates ribosomal protein L11. The polypeptide is Ribosomal protein L11 methyltransferase (Stenotrophomonas maltophilia (strain R551-3)).